Here is a 149-residue protein sequence, read N- to C-terminus: Putative pre-16S rRNA nuclease (149 aa).

Belongs to the YqgF nuclease family.

Its subcellular location is the cytoplasm. Could be a nuclease involved in processing of the 5'-end of pre-16S rRNA. In Burkholderia vietnamiensis (strain G4 / LMG 22486) (Burkholderia cepacia (strain R1808)), this protein is Putative pre-16S rRNA nuclease.